We begin with the raw amino-acid sequence, 228 residues long: Thymidylate kinase (228 aa).

The span at 1–10 (MSDSAVQRSS) shows a compositional bias: polar residues. The disordered stretch occupies residues 1–23 (MSDSAVQRSSGRGRFITFEGGEG). 20 to 27 (GGEGTGKS) is an ATP binding site.

Belongs to the thymidylate kinase family.

It catalyses the reaction dTMP + ATP = dTDP + ADP. Its function is as follows. Phosphorylation of dTMP to form dTDP in both de novo and salvage pathways of dTTP synthesis. This is Thymidylate kinase from Bradyrhizobium diazoefficiens (strain JCM 10833 / BCRC 13528 / IAM 13628 / NBRC 14792 / USDA 110).